Consider the following 218-residue polypeptide: MEWSQIFHDITTKHDFKAMHDFLEKEYSTAIVYPDRENIYQAFDLTPFENIKVVILGQDPYHGPNQAHGLAFSVQPNAKFPPSLRNMYKELADDIGCVRQTPHLQDWAREGVLLLNTVLTVRQGEANSHRDIGWETFTDEIIKAVSDYKEHVVFILWGKPAQQKIKLIDTSKHCIIKSVHPSPLSAYRGFFGSKPYSKANAYLESVGKLPINWCESEA.

D59 (proton acceptor) is an active-site residue.

Belongs to the uracil-DNA glycosylase (UDG) superfamily. UNG family.

The protein resides in the cytoplasm. The enzyme catalyses Hydrolyzes single-stranded DNA or mismatched double-stranded DNA and polynucleotides, releasing free uracil.. In terms of biological role, excises uracil residues from the DNA which can arise as a result of misincorporation of dUMP residues by DNA polymerase or due to deamination of cytosine. This Staphylococcus aureus (strain MSSA476) protein is Uracil-DNA glycosylase.